We begin with the raw amino-acid sequence, 2813 residues long: von Willebrand factor (2813 aa).

A signal peptide spans 1-22; it reads MIPARFAGVLLALALILPGTLC. The VWFD 1 domain maps to 33 to 201; sequence ARCSLFGSDF…ALSSGEQWCE (169 aa). 2 disulfides stabilise this stretch: C35/C162 and C57/C200. N99, N156, and N211 each carry an N-linked (GlcNAc...) asparagine glycan. One can recognise a TIL 1 domain in the interval 295-348; it reads CPAGMEYRQCVSPCARTCQSLHINEMCQERCVDGCSCPEGQLLDEGLCVESTEC. A VWFD 2 domain is found at 386 to 560; the sequence is GECLVTGQSH…NAWKLHGDCQ (175 aa). 3 disulfides stabilise this stretch: C388/C524, C410/C559, and C432/C440. 2 consecutive TIL domains span residues 652–707 and 776–827; these read CPKG…KAQC and CPAD…LERC. The N-linked (GlcNAc...) asparagine glycan is linked to N666. Residues 764-787 are amino-terminal; sequence SLSCRPPMVKLVCPADNLRAEGLE. Disulfide bonds link C767-C808, C776-C804, and C810-C821. An E1 region spans residues 788–833; sequence CTKTCQNYDLECMSMGCVSGCLCPPGMVRHENRCVALERCPCFHQG. The CX stretch occupies residues 826 to 853; the sequence is RCPCFHQGKEYAPGETVKIGCNTCVCQD. A glycan (N-linked (GlcNAc...) asparagine) is linked at N857. Residues 865–1032 enclose the VWFD 3 domain; it reads ATCSTIGMAH…NSWKVSSQCA (168 aa). Cystine bridges form between C867-C996, C889-C1031, C898-C993, C914-C921, C1060-C1084, C1071-C1111, C1089-C1091, and C1126-C1130. The region spanning 1146 to 1196 is the TIL 4 domain; the sequence is YNSCAPACQVTCQHPEPLACPVQCVEGCHAHCPPGKILDELLQTCVDPEDC. N1147 is a glycosylation site (N-linked (GlcNAc...) asparagine; atypical). Cystine bridges form between C1149-C1169, C1153-C1165, and C1196-C1199. An N-linked (GlcNAc...) asparagine glycan is attached at N1231. Residues C1234 and C1237 are joined by a disulfide bond. Residues T1248, T1255, and T1256 are each glycosylated (O-linked (GalNAc...) threonine). An O-linked (GalNAc...) serine glycan is attached at S1263. Residues C1272 and C1458 are joined by a disulfide bond. A VWFA 1; binding site for platelet glycoprotein Ib domain is found at 1277–1453; that stretch reads DLVFLLDGSS…DELEQQRDEI (177 aa). Residues T1468 and T1477 are each glycosylated (O-linked (GalNAc...) threonine). S1486 carries O-linked (GalNAc...) serine glycosylation. An O-linked (GalNAc...) threonine glycan is attached at T1487. Positions 1498 to 1665 constitute a VWFA 2 domain; the sequence is DVAFVLEGSD…TLPREAPDLV (168 aa). N-linked (GlcNAc...) (complex) asparagine glycosylation is present at N1515. An N-linked (GlcNAc...) asparagine glycan is attached at N1574. Cysteines 1669 and 1670 form a disulfide. T1679 carries O-linked (GalNAc...) threonine glycosylation. Disulfide bonds link C1686/C1872, C1879/C1904, C1899/C1940, C1927/C2088, C1950/C2085, C1972/C2123, and C1993/C2001. The 181-residue stretch at 1691–1871 folds into the VWFA 3; main binding site for collagens type I and III domain; it reads DVILLLDGSS…TLGNSFLHKL (181 aa). A VWFD 4 domain is found at 1948 to 2124; that stretch reads CVCTGSSTRH…TVQRPGQTCQ (177 aa). Residues 2216 to 2261 form an E2 region; it reads CPRHCDGNVSSCGDHPSEGCFCPPDKVMLEGSCVPEEACTQCIGED. 2 N-linked (GlcNAc...) asparagine glycosylation sites follow: N2223 and N2290. A VWFC 1 domain is found at 2255–2328; sequence TQCIGEDGVQ…CCPEYECVCD (74 aa). The O-linked (GalNAc...) threonine glycan is linked to T2298. 2 N-linked (GlcNAc...) asparagine glycosylation sites follow: N2357 and N2400. Residues 2429–2495 form the VWFC 2 domain; sequence KVCVHRSTIY…HEGECCGRCL (67 aa). The Cell attachment site motif lies at 2507–2509; the sequence is RGD. Residues N2546 and N2585 are each glycosylated (N-linked (GlcNAc...) asparagine). Positions 2580–2645 constitute a VWFC 3 domain; sequence EACMLNGTVI…NTGECCGRCL (66 aa). 4 disulfide bridges follow: C2724–C2774, C2739–C2788, C2750–C2804, and C2754–C2806. One can recognise a CTCK domain in the interval 2724 to 2812; sequence CNDITARLQY…ECKCSPRKCS (89 aa). N2790 carries N-linked (GlcNAc...) asparagine glycosylation.

As to quaternary structure, multimeric. Interacts with F8. Post-translationally, all cysteine residues are involved in intrachain or interchain disulfide bonds. N- and O-glycosylated. Plasma.

It localises to the secreted. Its subcellular location is the extracellular space. It is found in the extracellular matrix. In terms of biological role, important in the maintenance of hemostasis, it promotes adhesion of platelets to the sites of vascular injury by forming a molecular bridge between sub-endothelial collagen matrix and platelet-surface receptor complex GPIb-IX-V. Also acts as a chaperone for coagulation factor VIII, delivering it to the site of injury, stabilizing its heterodimeric structure and protecting it from premature clearance from plasma. This Homo sapiens (Human) protein is von Willebrand factor (VWF).